Reading from the N-terminus, the 174-residue chain is Gamma-crystallin E (174 aa).

2 consecutive Beta/gamma crystallin 'Greek key' domains span residues 2 to 40 and 41 to 83; these read GKITFYEDRGFQGRHYECSTDHSNLQPYFSRCNSVRVDS and GCWM…RLIP. The interval 84–87 is connecting peptide; sequence HSSS. Beta/gamma crystallin 'Greek key' domains lie at 88–128 and 129–171; these read HRIK…HVME and GYWV…RRIM.

It belongs to the beta/gamma-crystallin family. As to expression, detected in the superior olivary complex of the auditory hindbrain.

Its function is as follows. Crystallins are the dominant structural components of the vertebrate eye lens. This Mus musculus (Mouse) protein is Gamma-crystallin E (Cryge).